A 31-amino-acid polypeptide reads, in one-letter code: Photosystem II reaction center protein T (31 aa).

Residues 3–23 (SVAYILVLTMALSVIFFAIAF) form a helical membrane-spanning segment.

The protein belongs to the PsbT family. As to quaternary structure, PSII is composed of 1 copy each of membrane proteins PsbA, PsbB, PsbC, PsbD, PsbE, PsbF, PsbH, PsbI, PsbJ, PsbK, PsbL, PsbM, PsbT, PsbX, PsbY, PsbZ, Psb30/Ycf12, peripheral proteins PsbO, CyanoQ (PsbQ), PsbU, PsbV and a large number of cofactors. It forms dimeric complexes.

The protein resides in the cellular thylakoid membrane. Functionally, found at the monomer-monomer interface of the photosystem II (PS II) dimer, plays a role in assembly and dimerization of PSII. PSII is a light-driven water plastoquinone oxidoreductase, using light energy to abstract electrons from H(2)O, generating a proton gradient subsequently used for ATP formation. The chain is Photosystem II reaction center protein T from Microcystis aeruginosa (strain NIES-843 / IAM M-2473).